Consider the following 82-residue polypeptide: DNA-directed RNA polymerase subunit Rpo5 (82 aa).

This sequence belongs to the archaeal Rpo5/eukaryotic RPB5 RNA polymerase subunit family. Part of the RNA polymerase complex.

It is found in the cytoplasm. It carries out the reaction RNA(n) + a ribonucleoside 5'-triphosphate = RNA(n+1) + diphosphate. In terms of biological role, DNA-dependent RNA polymerase (RNAP) catalyzes the transcription of DNA into RNA using the four ribonucleoside triphosphates as substrates. This is DNA-directed RNA polymerase subunit Rpo5 from Thermococcus onnurineus (strain NA1).